The primary structure comprises 193 residues: Orotate phosphoribosyltransferase (193 aa).

Residues Arg-85, Lys-89, His-91, and 111–119 (DDVLTTGKS) contribute to the 5-phospho-alpha-D-ribose 1-diphosphate site. Residues Thr-115 and Arg-143 each coordinate orotate.

The protein belongs to the purine/pyrimidine phosphoribosyltransferase family. PyrE subfamily. As to quaternary structure, homodimer. It depends on Mg(2+) as a cofactor.

It carries out the reaction orotidine 5'-phosphate + diphosphate = orotate + 5-phospho-alpha-D-ribose 1-diphosphate. It functions in the pathway pyrimidine metabolism; UMP biosynthesis via de novo pathway; UMP from orotate: step 1/2. In terms of biological role, catalyzes the transfer of a ribosyl phosphate group from 5-phosphoribose 1-diphosphate to orotate, leading to the formation of orotidine monophosphate (OMP). The sequence is that of Orotate phosphoribosyltransferase from Pyrobaculum islandicum (strain DSM 4184 / JCM 9189 / GEO3).